The following is a 284-amino-acid chain: Nucleotide-binding protein NMA0948 (284 aa).

8-15 contacts ATP; it reads GLSGSGKS. Residue 58 to 61 participates in GTP binding; the sequence is DVRS.

This sequence belongs to the RapZ-like family.

Displays ATPase and GTPase activities. The protein is Nucleotide-binding protein NMA0948 of Neisseria meningitidis serogroup A / serotype 4A (strain DSM 15465 / Z2491).